The following is a 2890-amino-acid chain: MSKKIPLKNRLRADFTKTPTDLEVPNLLLLQRDSYDSFLYSKEGKESGIEKVFKSIFPIQDEHNRITLEYAGCEFGKSKYTVREAMERGITYSIPLKIKVRLILWEKDTKSGEKNGIKDIKEQSIFIREIPLMTERTSFIINGVERVVVNQLHRSPGVIFKEEESSTSLNKLIYTGQIIPDRGSWLYFEYDSKDVLYARINKRRKVPVTILFRAMDYQKQDIIKMFYPLVKVRYENDKYLIPFASLDANQRMEFDLKDPQGKVILLAGKKLTSRKIKELKENHLEWVEYPMDILLNRHLAEPVMVGKEVLLDMLTQLDKNRLEKIHDLGVQEFVIINDLALGHDASIIQSFSADSESLKLLKQTEKIDDENALAAIRIHKVMKPGDPVTTEVAKQFVKKLFFDPERYDLTMVGRMKMNHKLGLHVPDYITTLTHEDIITTVKYLMKIKNNQGKIDDRDHLGNRRIRAVGELLANELHSGLVKMQKTIKDKLTTMSGTFDSLMPHDLVNSKMITSTIMEFFMGGQLSQFMDQTNPLSEVTHKRRLSALGEGGLVKDRVGFEARDVHPTHYGRICPIETPEGQNIGLINTLSTFTRVNDLGFIEAPYKKVVDGKVVGETIYLTAIQEDSHIIAPASTPIDEEGNILGDLIETRVEGEIVLNEKSKVTLMDLSSSMLVGVAASLIPFLEHDDANRALMGTNMQRQAVPLLRNDAPIVGTGIEKIIARDSWGAIKANRAGVVEKIDSKNIYILGEGKEEAYIDAYSLQKNLRTNQNTSFNQIPIVKVGDKVEAGQIIADGPSMDRGELALGKNVRVAFMPWNGYNFEDAIVVSERITKDDIFTSTHIYEKEVDARELKHGVEEFTADIPDVKEEALAHLDESGIVKVGTYVSAGMILVGKTSPKGEIKSTPEERLLRAIFGDKAGHVVNKSLYCPPSLEGTVIDVKVFTKKGYEKDARVLSAYEEEKAKLDMEHFDRLTMLNREELLRVSSLLSQAILEEPFSHNGKDYKEGDQIPKEEIASINRFTLASLVKKYSKEVQNHYEITKNNFLEQKKVLGEEHEEKLSILEKDDILPNGVIKKVKLYIATKRKLKVGDKMAGRHGNKGIVSNIVPVADMPYTADGEPVDIVLNPLGVPSRMNIGQILEMHLGLVGKEFGKQIASMLEDKTKDFAKELRAKMLEIANAINGKDPLTIHVLESCSDEELLEYAKDWSKGVKMAIPVFEGISQEKFYKLFELAKIAMDGKMDLYDGRTGEKMRERVNVGYMYMIKLHHLVDEKVHARSTGPYSLVTHQPVGGKALFGGQRFGEMEVWALEAYGAAHTLKEMLTIKSDDIRGRENAYRAIAKGEQVGESEIPETFYVLTKELQSLALDINIFGDDVDEDGSPKPIVIKEDDRPKDFSSFQLTLASPEKIHSWSYGEVKKPETINYRTLKPERDGLFCMKIFGPTKDYECLCGKYKKPRFKDIGTCEKCGVAITHSKVRRFRMGHIELATPVAHIWYVNSLPSRIGTLLGVKMKDLERVLYYEAYIVKEPGEAAYDNEGTKLVMKYDILNEEQYQNISRRYEDRGFVAQMGGEAIKDLLEEIDLITLLQSLKEEVKDTNSDAKKKKLIKRLKVVESFLNSGNRPEWMMLTVLPVLPPDLRPLVALDGGKFAVSDVNELYRRVINRNQRLKRLMELGAPEIIVRNEKRMLQEAVDVLFDNGRSTNAVKGANKRPLKSLSEIIKGKQGRFRQNLLGKRVDFSGRSVIVVGPNLKMDECGLPKNMALELFKPHLLSKLEERGYATTLKQAKRMIEQKSNEVWECLQEITEGYPVLLNRAPTLHKQSIQAFHPKLIDGKAIQLHPLVCSAFNADFDGDQMAVHVPLSQEAIAECKVLMLSSMNILLPASGKAVVIPSQDMVLGLYYLSLEKSGVKGEHKLFSSVNEIITAIDTKELDIHAKIRVLDQGNIIATSAGRMIIKSILPDFIPTDLWNRPMKKKDIGVLVDYVHKVGGIGITATFLDNLKTLGFRYATKAGISISMEDIITPKDKQKMVEKAKVEVKKIQQQYDQGLLTDQERYNKIIDTWTEVNDKMSKEMMSTIAQDKEGFNSIYMMADSGARGSAAQIRQLSAMRGLMTKPDGSIIETPIISNFKEGLNVLEYFNSTHGARKGLADTALKTANAGYLTRKLIDVSQNVKVVSDDCGTHEGIEITDIAVGSELIEPLEERIFGRVLLEDVIDPITNEILLYADTLIDEEGAKKVVEAGIKSITIRTPVTCKAPKGVCAKCYGLNLGEGKMSYPGEAVGVVAAQSIGEPGTQLTLRTFHVGGTASRSQDEREIVASKEGFVRFYNLRTYTNKEGKSIIANRRNASILVVEPKIKAPFDGELRIETVYEEVVVSVKNGDQEAKFVLRRSDIVKPSELAGVGGKIEGKVYLPYASGHKVHKGGSIADIIQEGWNVPNRIPYASELLVKDNDPIAQDVYAKEKGAIKYYVLEANHLERTHGIKKGDIVSEKGLFAVIADDNGREAARHYIARGSEILIDDNSEVGANSVISKPTTNTFKTIATWDPYNTPIIADFKGKVGFVDIIAGVTVAEKEDENTGTTSLVVNDYIPSGYKPSLFLEGINGEEVRYFLEPKTSIAISDGVSVEQAEVLAKIPKATVKSRDITGGLPRVSELFEARKPKPKDVAILSEVDGIVSFGKPIRNKEHIIVTSKDGRPMDYFVDKGKQILVHADEFVHAGEAMTDGVVSSHDILRISGEKELYKYIVSEVQQVYRRQGVSIADKHIEIIVSQMLRQVRILDSGDSKFIEGDLVSKKLFKEENARVIALKGEPAIAEPVLLGITRAAIGSDSIISAASFQETTKVLTEASIAMKKDFLEDLKENVVLGRMIPVGTGMYKNKKIVLRTLEDDPKF.

The tract at residues 1-1377 (MSKKIPLKNR…DINIFGDDVD (1377 aa)) is DNA-directed RNA polymerase subunit beta. The segment at 1384–2890 (PIVIKEDDRP…LRTLEDDPKF (1507 aa)) is DNA-directed RNA polymerase subunit beta'. Cys-1449, Cys-1451, Cys-1465, and Cys-1468 together coordinate Zn(2+). The Mg(2+) site is built by Asp-1849, Asp-1851, and Asp-1853. 4 residues coordinate Zn(2+): Cys-2179, Cys-2253, Cys-2260, and Cys-2263.

In the N-terminal section; belongs to the RNA polymerase beta chain family. The protein in the C-terminal section; belongs to the RNA polymerase beta' chain family. In terms of assembly, the RNAP catalytic core consists of 2 alpha, 1 beta/beta' and 1 omega subunit. When a sigma factor is associated with the core the holoenzyme is formed, which can initiate transcription. It depends on Mg(2+) as a cofactor. Requires Zn(2+) as cofactor.

The catalysed reaction is RNA(n) + a ribonucleoside 5'-triphosphate = RNA(n+1) + diphosphate. Its function is as follows. DNA-dependent RNA polymerase catalyzes the transcription of DNA into RNA using the four ribonucleoside triphosphates as substrates. The protein is Bifunctional DNA-directed RNA polymerase subunit beta-beta' (rpoBC) of Helicobacter pylori (strain Shi470).